The primary structure comprises 156 residues: Ribosomal RNA large subunit methyltransferase H (156 aa).

Residues L73, G104, and I123–L128 each bind S-adenosyl-L-methionine.

The protein belongs to the RNA methyltransferase RlmH family. Homodimer.

Its subcellular location is the cytoplasm. It catalyses the reaction pseudouridine(1915) in 23S rRNA + S-adenosyl-L-methionine = N(3)-methylpseudouridine(1915) in 23S rRNA + S-adenosyl-L-homocysteine + H(+). Its function is as follows. Specifically methylates the pseudouridine at position 1915 (m3Psi1915) in 23S rRNA. The sequence is that of Ribosomal RNA large subunit methyltransferase H from Xanthomonas axonopodis pv. citri (strain 306).